A 616-amino-acid chain; its full sequence is MAU2 chromatid cohesion factor homolog (616 aa).

TPR repeat units lie at residues 90–123 (FDTASLLAQLYQQQEQSSLAKPVLRKAIELSQHN), 445–478 (GSFYYVQGLNAFHKSSFHEAKRFLRETLKMANAE), and 485–518 (SCSLVLLSHVFLSIGNSKESMNMVTPAMQLASKI).

The protein belongs to the SCC4/mau-2 family. As to quaternary structure, component of the cohesin loading complex.

Its subcellular location is the nucleus. The protein resides in the nucleoplasm. Functionally, required for association of the cohesin complex with chromatin during interphase. Plays a role in sister chromatid cohesion and normal progression through prometaphase. The sequence is that of MAU2 chromatid cohesion factor homolog from Culex quinquefasciatus (Southern house mosquito).